Here is a 440-residue protein sequence, read N- to C-terminus: Chromosomal replication initiator protein DnaA (440 aa).

Residues 1-69 are domain I, interacts with DnaA modulators; sequence MKERILQEIK…VKVVLGNDAT (69 aa). Positions 69–96 are domain II; sequence TFEITYEAFEPHSSYSEPLVKKRAVLLT. Positions 97 to 313 are domain III, AAA+ region; the sequence is PLNPDYTFEN…GAIIKLLVYK (217 aa). Residues V108, N113, G140, L141, G142, K143, T144, H145, and R300 each contribute to the ADP site. G140 is an ATP binding site. ATP contacts are provided by G142, K143, and T144. T144 provides a ligand contact to Mg(2+). The tract at residues 314 to 440 is domain IV, binds dsDNA; the sequence is ETTGKEVDLK…GEISRRALSG (127 aa).

The protein belongs to the DnaA family. In terms of assembly, oligomerizes as a right-handed, spiral filament on DNA at oriC.

The protein localises to the cytoplasm. Plays an essential role in the initiation and regulation of chromosomal replication. ATP-DnaA binds to the origin of replication (oriC) to initiate formation of the DNA replication initiation complex once per cell cycle. Binds the DnaA box (a 9 base pair repeat at the origin) and separates the double-stranded (ds)DNA. Forms a right-handed helical filament on oriC DNA; dsDNA binds to the exterior of the filament while single-stranded (ss)DNA is stabiized in the filament's interior. The ATP-DnaA-oriC complex binds and stabilizes one strand of the AT-rich DNA unwinding element (DUE), permitting loading of DNA polymerase. After initiation quickly degrades to an ADP-DnaA complex that is not apt for DNA replication. Binds acidic phospholipids. Its function is as follows. The DnaA box consensus is 5'-[ATC][AT]AC[CT]TACCA[CT][CTA]-3' in this bacterium. Mutagenesis of residues that line the central pore blocks dsDNA separation. In Thermotoga maritima (strain ATCC 43589 / DSM 3109 / JCM 10099 / NBRC 100826 / MSB8), this protein is Chromosomal replication initiator protein DnaA.